The following is a 161-amino-acid chain: RNA pyrophosphohydrolase (161 aa).

The region spanning 9-155 (PYRPCVGVML…KRRVYRQVVD (147 aa)) is the Nudix hydrolase domain. The short motif at 44–65 (GGIDDGEELHPAALRELSEETG) is the Nudix box element.

The protein belongs to the Nudix hydrolase family. RppH subfamily. A divalent metal cation serves as cofactor.

Functionally, accelerates the degradation of transcripts by removing pyrophosphate from the 5'-end of triphosphorylated RNA, leading to a more labile monophosphorylated state that can stimulate subsequent ribonuclease cleavage. In Novosphingobium aromaticivorans (strain ATCC 700278 / DSM 12444 / CCUG 56034 / CIP 105152 / NBRC 16084 / F199), this protein is RNA pyrophosphohydrolase.